Reading from the N-terminus, the 84-residue chain is Gomesin (84 aa).

Positions 1-23 (MNRTRLFACLLLAVLILVHESNA) are cleaved as a signal peptide. A Pyrrolidone carboxylic acid modification is found at Gln-24. Cystine bridges form between Cys-25–Cys-38 and Cys-29–Cys-34. An Arginine amide modification is found at Arg-41. A propeptide spanning residues 42-84 (GKRSLDETNVGTSDVEKRAFDDSNVPSLVEERELEDEGSFIFD) is cleaved from the precursor.

In hemocytes only, but not in all hemocytes observed.

Its subcellular location is the secreted. In terms of biological role, active against several Gram-positive bacteria such as Bacillus spp, Staphylococcus spp and E.faecalis, several Gram-negative bacteria such as E.coli, K.pneumoniae, P.aeruginosa and Salmonella spp, filamentous fungi such as N.crassa, T.viridae and yeasts such as C.albicans. It is active against the parasite L.amazonensis as well. It shows hemolytic activity. The chain is Gomesin from Acanthoscurria gomesiana (Tarantula spider).